The following is a 622-amino-acid chain: Chaperone protein HscA homolog (622 aa).

Belongs to the heat shock protein 70 family.

Chaperone involved in the maturation of iron-sulfur cluster-containing proteins. Has a low intrinsic ATPase activity which is markedly stimulated by HscB. This Aromatoleum aromaticum (strain DSM 19018 / LMG 30748 / EbN1) (Azoarcus sp. (strain EbN1)) protein is Chaperone protein HscA homolog.